Reading from the N-terminus, the 908-residue chain is MADRIYDYKREKTKRVVKKVGFVISILVILAIVFSIAFDLFLELIQIKEIGRNFVSVFWKNFYVKLSVQVVSFMILFFVFFVNNAVIKRNIERIVGKISLLKKNILNVIVSVLLALIASRYLENNLYIKFLTFKHSKPFNIKDPIFNKDVGYYVFERPFFLSIVNFLFYLVIFVCIYTVVLYIVLYGFAFVSRVNSWGVLYDKKVRSHIFFNLILIFVIKIFTLKYEMEGLLYSFFGEVVGVGYTDYYIRMNYFRLSYIVLVAVILLSIYFFIKGKYANIAKVMLSYIGWAVLGTIIATAFQYFVVSPNEQVYERSFLEKNIKFTRLAYNLENIEEKYFPVDTSGTITAEDLQKNTGTIENIRITDYPTTLAILNQIQRFKQYYIFNDADIAKYTINGKIKSVFISAREINYDGIPTKTYINQKFQYTHGYGVVMSLMTEVTPEGQPKFIIKDIPLKSLDGAPKVTQPRIYYGEKTDPYVIVNTKVDEIDYPEGDSNRLFRYDGKGGIRLTPLNRLIFSYVYKDFRLLVSTAINSNSKILINRSIIERAKKVAPFFDYDTDPYILIDGKGHLVWVLDGYTKTNYYPYSEPTEEGFNYIRNSVKVLIDAYNGTLKFYIVDKNDPIVNVYKSIYPDLFENGDIPRDIAEHIRYPEYIFKVQASVLKRYHMTNPNVFYNKEDLWDFGKHKTPDGSIDYIPPYYSVMKLPDSQKEEMILMVPFTPLKYNTMIAWLAAKSSQENYGKLVLYKFPKGSTVYSPLQVENMIDQDPQISKDLSLWNQGGSKVIRGNLLALPINQKILYIEPIYIASDNASALPEVKRVIAACNGKVVMGSSLNDALSQLVGQQVTPVKDQMQTPSQKENITQVLPSSDLLKIKSLFEDAKKALQQGNWEEFGKKFKELDDMMKNVK.

7 helical membrane passes run 22-42 (FVIS…DLFL), 62-82 (FYVK…VFFV), 98-118 (ISLL…ALIA), 166-186 (FLFY…IVLY), 208-228 (HIFF…KYEM), 253-273 (YFRL…YFFI), and 286-306 (SYIG…YFVV).

This sequence belongs to the UPF0182 family.

The protein localises to the cell membrane. This is UPF0182 protein Csac_0864 from Caldicellulosiruptor saccharolyticus (strain ATCC 43494 / DSM 8903 / Tp8T 6331).